Consider the following 240-residue polypeptide: CRISPR-associated protein Cas5 3 (240 aa).

This sequence belongs to the CRISPR-associated protein Cas5 family. Subtype I-A/Apern subfamily. In terms of assembly, part of the aCascade ribonucleoprotein complex.

Functionally, CRISPR (clustered regularly interspaced short palindromic repeat) is an adaptive immune system that provides protection against mobile genetic elements (viruses, transposable elements and conjugative plasmids). CRISPR clusters contain spacers, sequences complementary to antecedent mobile elements, and target invading nucleic acids. CRISPR clusters are transcribed and processed into CRISPR RNA (crRNA). This chain is CRISPR-associated protein Cas5 3 (cas5c), found in Saccharolobus solfataricus (strain ATCC 35092 / DSM 1617 / JCM 11322 / P2) (Sulfolobus solfataricus).